The sequence spans 545 residues: Chaperonin GroEL 1 (545 aa).

Residues 30-33 (TLGP), Lys51, 87-91 (DGTTT), Gly415, and Asp495 contribute to the ATP site.

This sequence belongs to the chaperonin (HSP60) family. Forms a cylinder of 14 subunits composed of two heptameric rings stacked back-to-back. Interacts with the co-chaperonin GroES.

The protein localises to the cytoplasm. It catalyses the reaction ATP + H2O + a folded polypeptide = ADP + phosphate + an unfolded polypeptide.. Functionally, together with its co-chaperonin GroES, plays an essential role in assisting protein folding. The GroEL-GroES system forms a nano-cage that allows encapsulation of the non-native substrate proteins and provides a physical environment optimized to promote and accelerate protein folding. The polypeptide is Chaperonin GroEL 1 (Rhizobium meliloti (strain 1021) (Ensifer meliloti)).